The chain runs to 136 residues: uncharacterized protein (136 aa).

This is an uncharacterized protein from Caenorhabditis elegans.